The following is a 456-amino-acid chain: Exodeoxyribonuclease 7 large subunit (456 aa).

It belongs to the XseA family. Heterooligomer composed of large and small subunits.

It is found in the cytoplasm. The enzyme catalyses Exonucleolytic cleavage in either 5'- to 3'- or 3'- to 5'-direction to yield nucleoside 5'-phosphates.. In terms of biological role, bidirectionally degrades single-stranded DNA into large acid-insoluble oligonucleotides, which are then degraded further into small acid-soluble oligonucleotides. This chain is Exodeoxyribonuclease 7 large subunit, found in Shigella dysenteriae serotype 1 (strain Sd197).